A 134-amino-acid polypeptide reads, in one-letter code: Beta-synuclein (134 aa).

2 tandem repeats follow at residues 20–30 (EKTKQGVTEAA) and 31–41 (EKTKEGVLYVG). The segment at 20 to 67 (EKTKQGVTEAAEKTKEGVLYVGSKTREGVVQGVASVAEKTKEQASHLG) is 4 X 11 AA tandem repeats of [EGS]-K-T-K-[EQ]-[GQ]-V-X(4). One copy of the 3; approximate repeat lies at 42 to 56 (SKTREGVVQGVASVA). Copy 4 of the repeat occupies 57-67 (EKTKEQASHLG). The segment at 89–134 (FPTDLKPEEVAQEAAEEPLIEPLMEPEGESYEDPPQEEYQEYEPEA) is disordered. Residues 98-134 (VAQEAAEEPLIEPLMEPEGESYEDPPQEEYQEYEPEA) are compositionally biased toward acidic residues. Residue S118 is modified to Phosphoserine; by BARK1, CK2 and GRK5.

Belongs to the synuclein family. Post-translationally, phosphorylated. Phosphorylation by G-protein coupled receptor kinases (GRK) is more efficient than phosphorylation by CK1, CK2 and CaM-kinase II. In terms of tissue distribution, expressed predominantly in brain; concentrated in presynaptic nerve terminals.

It is found in the cytoplasm. Functionally, non-amyloid component of senile plaques found in Alzheimer disease. Could act as a regulator of SNCA aggregation process. Protects neurons from staurosporine and 6-hydroxy dopamine (6OHDA)-stimulated caspase activation in a p53/TP53-dependent manner. Contributes to restore the SNCA anti-apoptotic function abolished by 6OHDA. Not found in the Lewy bodies associated with Parkinson disease. The protein is Beta-synuclein (SNCB) of Homo sapiens (Human).